Consider the following 462-residue polypeptide: Glycoprotein endo-alpha-1,2-mannosidase (462 aa).

Residues 1–9 (MAKFRRRTC) lie on the Cytoplasmic side of the membrane. Residues 10 to 30 (ILLSLFILFIFSLMMGLKMLW) form a helical; Signal-anchor for type II membrane protein membrane-spanning segment. Topologically, residues 31–462 (PNAASFGPPF…YALDQQQPAS (432 aa)) are lumenal. Residues 60-462 (DFQRSDRINM…YALDQQQPAS (403 aa)) are catalytic.

This sequence belongs to the glycosyl hydrolase 99 family. In terms of processing, undergoes proteolytic cleavage in the C-terminal region.

Its subcellular location is the golgi apparatus membrane. It catalyses the reaction N-{alpha-Glc-(1-&gt;3)-alpha-Man-(1-&gt;2)-alpha-Man-(1-&gt;2)-alpha-Man-(1-&gt;3)-[alpha-Man-(1-&gt;2)-alpha-Man-(1-&gt;3)-[alpha-Man-(1-&gt;2)-alpha-Man-(1-&gt;6)]-alpha-Man-(1-&gt;6)]-beta-Man-(1-&gt;4)-beta-GlcNAc-(1-&gt;4)-beta-GlcNAc}-L-asparaginyl-[protein] + H2O = alpha-D-glucosyl-(1-&gt;3)-D-mannopyranose + N(4)-{alpha-D-Man-(1-&gt;2)-alpha-D-Man-(1-&gt;3)-[alpha-D-Man-(1-&gt;2)-alpha-D-Man-(1-&gt;3)-[alpha-D-Man-(1-&gt;2)-alpha-D-Man-(1-&gt;6)]-alpha-D-Man-(1-&gt;6)]-beta-D-Man-(1-&gt;4)-beta-D-GlaNAc-(1-&gt;4)-beta-D-GlcNAc}-L-asparaginyl-[protein] (N-glucan mannose isomer 8A1,2,3B1,2). The chain is Glycoprotein endo-alpha-1,2-mannosidase (Manea) from Mus musculus (Mouse).